A 380-amino-acid chain; its full sequence is Rab9 effector protein with kelch motifs (380 aa).

Kelch repeat units lie at residues 57–103 (KIFI…FLPS), 108–154 (SIWV…TSSA), 159–211 (QLYV…AAGT), 212–258 (KLFI…AAVA), 262–311 (HVYM…VIPW), and 357–380 (LCFV…TVVD).

Interacts with PIKFYVE; the interaction recruits RABEPK to the endosomal membrane. Interacts with RAB9 in its GTP-bound conformation. In terms of processing, phosphorylated on Ser residues by PIKFYVE.

It is found in the cytoplasm. Its subcellular location is the endosome membrane. Rab9 effector required for endosome to trans-Golgi network (TGN) transport. This is Rab9 effector protein with kelch motifs from Mus musculus (Mouse).